The chain runs to 314 residues: Olfactory receptor 10A6 (314 aa).

Topologically, residues 1–25 (MERQNQSCVVEFILLGFSNYPELQG) are extracellular. A glycan (N-linked (GlcNAc...) asparagine) is linked at Asn5. Residues 26-46 (QLFVAFLVIYLVTLIGNAIII) form a helical membrane-spanning segment. The Cytoplasmic segment spans residues 47–54 (VIVSLDQS). The helical transmembrane segment at 55 to 75 (LHVPMYLFLLNLSVVDLSFSA) threads the bilayer. The Extracellular segment spans residues 76–99 (VIMPEMLVVLSTEKTTISFGGCFA). Cys97 and Cys189 are oxidised to a cystine. The helical transmembrane segment at 100–120 (QMYFILLFGGAECFLLGAMAY) threads the bilayer. At 121–139 (DRFAAICHPLNYQMIMNKG) the chain is on the cytoplasmic side. Residues 140–160 (VFMKLIIFSWALGFMLGTVQT) traverse the membrane as a helical segment. The Extracellular portion of the chain corresponds to 161–197 (SWVSSFPFCGLNEINHISCETPAVLELACADTFLFEI). A helical transmembrane segment spans residues 198 to 217 (YAFTGTFLIILVPFLLILLS). Over 218-237 (YIRVLFAILKMPSTTGRQKA) the chain is Cytoplasmic. The helical transmembrane segment at 238–258 (FSTCAAHLTSVTLFYGTASMT) threads the bilayer. Over 259-271 (YLQPKSGYSPETK) the chain is Extracellular. A helical transmembrane segment spans residues 272–292 (KVMSLSYSLLTPLLNLLIYSL). Topologically, residues 293–314 (RNSEMKRALMKLWRRRVVLHTI) are cytoplasmic.

It belongs to the G-protein coupled receptor 1 family.

It is found in the cell membrane. Functionally, odorant receptor. The polypeptide is Olfactory receptor 10A6 (OR10A6) (Homo sapiens (Human)).